The primary structure comprises 682 residues: Potassium-transporting ATPase ATP-binding subunit (682 aa).

A run of 4 helical transmembrane segments spans residues 34 to 54 (PVMF…LAMV), 62 to 82 (ALFT…ANFA), 219 to 239 (IALT…TATL), and 254 to 274 (VLVA…LSAI). The 4-aspartylphosphate intermediate role is filled by D307. Residues D344, E348, 377-384 (FTAQSRMS), and K395 contribute to the ATP site. 2 residues coordinate Mg(2+): D518 and D522. 3 helical membrane-spanning segments follow: residues 588–608 (FAII…LNVM), 616–636 (AILS…PLAL), and 662–682 (LVVP…LGLA).

It belongs to the cation transport ATPase (P-type) (TC 3.A.3) family. Type IA subfamily. The system is composed of three essential subunits: KdpA, KdpB and KdpC.

It is found in the cell inner membrane. The catalysed reaction is K(+)(out) + ATP + H2O = K(+)(in) + ADP + phosphate + H(+). Functionally, part of the high-affinity ATP-driven potassium transport (or Kdp) system, which catalyzes the hydrolysis of ATP coupled with the electrogenic transport of potassium into the cytoplasm. This subunit is responsible for energy coupling to the transport system and for the release of the potassium ions to the cytoplasm. The sequence is that of Potassium-transporting ATPase ATP-binding subunit from Salmonella schwarzengrund (strain CVM19633).